The primary structure comprises 281 residues: Probable thioesterase gloN (281 aa).

Residues 207-233 (LDDGSNNSRDLNETSPTETSNDSETQA) are disordered. Positions 210 to 232 (GSNNSRDLNETSPTETSNDSETQ) are enriched in polar residues.

The protein belongs to the AMT4 thioesterase family.

It functions in the pathway mycotoxin biosynthesis. Probable thioesterase; part of the gene cluster that mediates the biosynthesis of pneumocandins, lipohexapeptides of the echinocandin family that prevent fungal cell wall formation by non-competitive inhibition of beta-1,3-glucan synthase. The 10,12-dimethylmyristoyl side chain is synthesized by the reducing polyketide synthase gloL/GLPKS4. The thioesterase gloN/GLHYD exclusively interacts with gloL/GLPKS4 to maintain turnover of the polyketide side chain. The 10R,12S-dimethylmyristic acid is then transferred to the first thiolation domain of the nonribosomal peptide synthetase gloA/GLNRPS4 by the acyl-AMP ligase gloD/GLligase, followed by its acylation to L-ornithine to trigger elongation of the cyclic hexapeptide. L-ornithine, 4R-hydroxyl-L-proline (generated from L-proline by the dioxygenase gloF/GLOXY2), 3S-hydroxyl-L-homotyrosine (generated by gloG/GLHtyB, gloH/GLHtyA, gloI/GLHtyC, gloJ/GLHtyD and hydroxylated at C-3 by the dioxygenase gloM/GLOXY1), 3R-hydroxyl-L-glutamine (generated from L-glutamine probably by the dioxygenase gloE/GLOXY3) and 3S-hydroxyl-L-proline (generated from L-proline by the dioxygenase gloF/GLOXY2 to yield pneumocandin B0), or 3S-hydroxyl-4S-methyl-L-proline (generated from L-leucine by the dioxygenase gloC/GLOXY4 to yield pneumocandin A0) are sequentially added to the growing chain. The last C domain of gloA/GLNRPS4 is proposed to be responsible for cyclization by condensation to form the peptide bond between L-ornithine and 3S-hydroxyl-4S-methyl-L-proline (for pneumocandin A0) or 3S-hydroxyl-L-proline (for pneumocandin B0). Finally, the subsequent C-4 hydroxylation of 3S-hydroxyl-L-homotyrosine and L-ornithine dihydroxylation at C-4 and C-5 are performed by the cytochrome P450 monooxygenases gloP/GLP450-1 and gloO/GLP450-2, respectively. The chain is Probable thioesterase gloN from Glarea lozoyensis (strain ATCC 20868 / MF5171).